A 1076-amino-acid chain; its full sequence is Carbamoyl phosphate synthase large chain (1076 aa).

The interval 1–402 (MPKREDIRKI…ALQKAIRSLE (402 aa)) is carboxyphosphate synthetic domain. 12 residues coordinate ATP: R129, R169, G175, G176, E208, V210, E215, G241, V242, H243, Q285, and E299. In terms of domain architecture, ATP-grasp 1 spans 133-328 (KEAMRKIGLD…IAKIAAKLAV (196 aa)). Residues Q285, E299, and N301 each coordinate Mg(2+). Positions 285, 299, and 301 each coordinate Mn(2+). Residues 403-555 (IGRYGLGCDG…YSTYEDENEA (153 aa)) form an oligomerization domain region. The tract at residues 556-939 (LRSERKKVMI…YKAELAAGMK (384 aa)) is carbamoyl phosphate synthetic domain. Residues 680 to 871 (AELLERLNIP…LAKIAAKLMM (192 aa)) form the ATP-grasp 2 domain. 10 residues coordinate ATP: R716, K755, L757, E762, G787, V788, H789, S790, Q830, and E842. 3 residues coordinate Mg(2+): Q830, E842, and N844. 3 residues coordinate Mn(2+): Q830, E842, and N844. In terms of domain architecture, MGS-like spans 938 to 1076 (MKLPLKGTVF…KSIQEYHEES (139 aa)). The tract at residues 940-1076 (LPLKGTVFIS…KSIQEYHEES (137 aa)) is allosteric domain.

It belongs to the CarB family. In terms of assembly, composed of two chains; the small (or glutamine) chain promotes the hydrolysis of glutamine to ammonia, which is used by the large (or ammonia) chain to synthesize carbamoyl phosphate. Tetramer of heterodimers (alpha,beta)4. Requires Mg(2+) as cofactor. Mn(2+) is required as a cofactor.

The enzyme catalyses hydrogencarbonate + L-glutamine + 2 ATP + H2O = carbamoyl phosphate + L-glutamate + 2 ADP + phosphate + 2 H(+). It carries out the reaction hydrogencarbonate + NH4(+) + 2 ATP = carbamoyl phosphate + 2 ADP + phosphate + 2 H(+). It functions in the pathway amino-acid biosynthesis; L-arginine biosynthesis; carbamoyl phosphate from bicarbonate: step 1/1. The protein operates within pyrimidine metabolism; UMP biosynthesis via de novo pathway; (S)-dihydroorotate from bicarbonate: step 1/3. Its function is as follows. Large subunit of the glutamine-dependent carbamoyl phosphate synthetase (CPSase). CPSase catalyzes the formation of carbamoyl phosphate from the ammonia moiety of glutamine, carbonate, and phosphate donated by ATP, constituting the first step of 2 biosynthetic pathways, one leading to arginine and/or urea and the other to pyrimidine nucleotides. The large subunit (synthetase) binds the substrates ammonia (free or transferred from glutamine from the small subunit), hydrogencarbonate and ATP and carries out an ATP-coupled ligase reaction, activating hydrogencarbonate by forming carboxy phosphate which reacts with ammonia to form carbamoyl phosphate. This Archaeoglobus fulgidus (strain ATCC 49558 / DSM 4304 / JCM 9628 / NBRC 100126 / VC-16) protein is Carbamoyl phosphate synthase large chain.